The chain runs to 262 residues: Aminoglycoside (3'') (9) adenylyltransferase (262 aa).

It catalyses the reaction streptomycin + ATP = 3''-O-adenylylstreptomycin + diphosphate. It carries out the reaction spectinomycin + ATP = 9-O-adenylylspectinomycin + diphosphate. Mediates bacterial resistance to the antibiotics streptomycin and spectinomycin. In Shigella flexneri, this protein is Aminoglycoside (3'') (9) adenylyltransferase.